Reading from the N-terminus, the 417-residue chain is MAEYKNYTLNFGPVHPAAHGVLRLILELDGENVVRADPHVGLLHRGTEKLAEFKPYNQSIGYMDRLDYVSMMCNEHAYVMAIEKLLQLEVPERAKYIRVMFAEMTRILNHLLWVAACGIDLGAMTVFLYAFRVREDLFDCYEAVSGARMHAAYFRPGGVARDLPTQMPQYQKTRFTSKRKAKKLNEPRQGSMLDFLDHFVVDFEKSLDEIDTLLTDNRLWKQRTVDIGTVTAERAKELGFTGPMLRGSGVAWDLRKTQPYEVYHKLEFDIPIGANGDCYDRYLVRMAEMRESNKLIKQCVDWLRANPGPVLSDNHKVAPPKRNAMKNNMEELIHHFKLFSEGYCTTEGEVYVGTEHPKGEFGVYIKSDGANKPYRLKMRAPGFAHISAMDELLSGHMLADTPAIISTIDVVFGDVDR.

This sequence belongs to the complex I 49 kDa subunit family. NDH-1 is composed of 14 different subunits. Subunits NuoB, C, D, E, F, and G constitute the peripheral sector of the complex.

It is found in the cell inner membrane. The enzyme catalyses a quinone + NADH + 5 H(+)(in) = a quinol + NAD(+) + 4 H(+)(out). In terms of biological role, NDH-1 shuttles electrons from NADH, via FMN and iron-sulfur (Fe-S) centers, to quinones in the respiratory chain. The immediate electron acceptor for the enzyme in this species is believed to be ubiquinone. Couples the redox reaction to proton translocation (for every two electrons transferred, four hydrogen ions are translocated across the cytoplasmic membrane), and thus conserves the redox energy in a proton gradient. This chain is NADH-quinone oxidoreductase subunit D, found in Francisella tularensis subsp. mediasiatica (strain FSC147).